Consider the following 269-residue polypeptide: 2-dehydro-3-deoxyphosphooctonate aldolase (269 aa).

Belongs to the KdsA family.

The protein resides in the cytoplasm. The enzyme catalyses D-arabinose 5-phosphate + phosphoenolpyruvate + H2O = 3-deoxy-alpha-D-manno-2-octulosonate-8-phosphate + phosphate. It participates in carbohydrate biosynthesis; 3-deoxy-D-manno-octulosonate biosynthesis; 3-deoxy-D-manno-octulosonate from D-ribulose 5-phosphate: step 2/3. The protein operates within bacterial outer membrane biogenesis; lipopolysaccharide biosynthesis. This chain is 2-dehydro-3-deoxyphosphooctonate aldolase, found in Chlamydia felis (strain Fe/C-56) (Chlamydophila felis).